Consider the following 644-residue polypeptide: DNA mismatch repair protein MutL (644 aa).

Residues 336–356 form a disordered region; sequence KRNINPLNRDDKTKDKSEYQK. Basic and acidic residues predominate over residues 343-356; sequence NRDDKTKDKSEYQK.

The protein belongs to the DNA mismatch repair MutL/HexB family.

Functionally, this protein is involved in the repair of mismatches in DNA. It is required for dam-dependent methyl-directed DNA mismatch repair. May act as a 'molecular matchmaker', a protein that promotes the formation of a stable complex between two or more DNA-binding proteins in an ATP-dependent manner without itself being part of a final effector complex. In Halothermothrix orenii (strain H 168 / OCM 544 / DSM 9562), this protein is DNA mismatch repair protein MutL.